The chain runs to 1434 residues: DNA-directed RNA polymerase subunit beta (1434 aa).

The protein belongs to the RNA polymerase beta chain family. In terms of assembly, the RNAP catalytic core consists of 2 alpha, 1 beta, 1 beta' and 1 omega subunit. When a sigma factor is associated with the core the holoenzyme is formed, which can initiate transcription.

It catalyses the reaction RNA(n) + a ribonucleoside 5'-triphosphate = RNA(n+1) + diphosphate. Functionally, DNA-dependent RNA polymerase catalyzes the transcription of DNA into RNA using the four ribonucleoside triphosphates as substrates. The chain is DNA-directed RNA polymerase subunit beta from Ureaplasma parvum serovar 3 (strain ATCC 27815 / 27 / NCTC 11736).